A 322-amino-acid polypeptide reads, in one-letter code: Corticotropin-releasing factor-binding protein (322 aa).

The first 24 residues, 1 to 24 (MSPNFKLQCHFILIFLTALRGESR), serve as a signal peptide directing secretion. Disulfide bonds link C60–C81, C104–C141, C183–C205, C237–C264, and C277–C318. Residue N204 is glycosylated (N-linked (GlcNAc...) asparagine).

It belongs to the CRF-binding protein family.

The protein resides in the secreted. Functionally, binds CRF and inactivates it. May prevent inappropriate pituitary-adrenal stimulation in pregnancy. This Homo sapiens (Human) protein is Corticotropin-releasing factor-binding protein (CRHBP).